Here is a 516-residue protein sequence, read N- to C-terminus: Radial spoke head protein 3 homolog A (516 aa).

3 disordered regions span residues Met-1 to Ala-45, Ser-120 to Ser-139, and Pro-190 to Gly-233. The segment covering Ala-12–Ala-25 has biased composition (basic residues). Over residues Ser-120–Thr-129 the composition is skewed to polar residues. The span at Gln-208–Lys-217 shows a compositional bias: basic residues. A compositionally biased stretch (basic and acidic residues) spans Arg-218 to Gly-233. Thr-270 is subject to Phosphothreonine; by MAPK1. Residues Tyr-333–Val-369 adopt a coiled-coil conformation. The disordered stretch occupies residues Glu-459–Glu-516. Over residues Gln-465–Thr-486 the composition is skewed to polar residues. Residues Gln-502 to Glu-516 show a composition bias toward basic and acidic residues.

It belongs to the flagellar radial spoke RSP3 family. In terms of assembly, may be a component of axonemal radial spokes. Interacts with IQUB. Interacts with phosphorylated MAPK1. Interacts with MEK1. Interacts with PKA regulatory subunits PRKAR1A and PRKAR1B. Interacts with RSPH1. Interacts with RSPH4A. Interacts with RSPH6A. Interacts with RSPH9. Interacts with CFAP61. Interacts with LRRC23.

Its subcellular location is the cytoplasm. It is found in the cytoskeleton. The protein resides in the cilium axoneme. It localises to the flagellum axoneme. Functionally, may function as part of axonemal radial spoke complexes that play an important part in the motility of sperm and cilia. Functions as a protein kinase A-anchoring protein that scaffolds the cAMP-dependent protein kinase holoenzyme. May serve as a point of convergence for MAPK and PKA signaling in cilia. This is Radial spoke head protein 3 homolog A (Rsph3a) from Mus musculus (Mouse).